We begin with the raw amino-acid sequence, 207 residues long: Large ribosomal subunit protein uL4 (207 aa).

The segment at 45–80 (RQGTHAVKNRSEVRGGGRKPWRQKGTGRARQGSTRS) is disordered. The span at 60-71 (GGRKPWRQKGTG) shows a compositional bias: basic residues.

Belongs to the universal ribosomal protein uL4 family. In terms of assembly, part of the 50S ribosomal subunit.

In terms of biological role, one of the primary rRNA binding proteins, this protein initially binds near the 5'-end of the 23S rRNA. It is important during the early stages of 50S assembly. It makes multiple contacts with different domains of the 23S rRNA in the assembled 50S subunit and ribosome. Functionally, forms part of the polypeptide exit tunnel. This chain is Large ribosomal subunit protein uL4, found in Oceanobacillus iheyensis (strain DSM 14371 / CIP 107618 / JCM 11309 / KCTC 3954 / HTE831).